A 305-amino-acid polypeptide reads, in one-letter code: tRNA dimethylallyltransferase (305 aa).

9-16 provides a ligand contact to ATP; it reads GPTASGKS. 11-16 contacts substrate; it reads TASGKS. Positions 34-37 are interaction with substrate tRNA; it reads DSKQ.

The protein belongs to the IPP transferase family. Monomer. Mg(2+) is required as a cofactor.

The enzyme catalyses adenosine(37) in tRNA + dimethylallyl diphosphate = N(6)-dimethylallyladenosine(37) in tRNA + diphosphate. Its function is as follows. Catalyzes the transfer of a dimethylallyl group onto the adenine at position 37 in tRNAs that read codons beginning with uridine, leading to the formation of N6-(dimethylallyl)adenosine (i(6)A). This is tRNA dimethylallyltransferase from Anaplasma marginale (strain Florida).